A 373-amino-acid chain; its full sequence is Peroxisomal biogenesis factor 3 (373 aa).

Residues Met1–Lys15 lie on the Cytoplasmic side of the membrane. Residues Met1–Ala45 are targeting to peroxisomes. The chain crosses the membrane as a helical span at residues Cys16 to Lys36. Topologically, residues Ile37 to Thr116 are peroxisomal. A helical membrane pass occupies residues Val117–Ile140. Positions Tyr120 to Ile136 are interaction with PEX19. Over Tyr141–Lys373 the chain is Cytoplasmic.

The protein belongs to the peroxin-3 family. Interacts with PEX19. As to expression, found in all examined tissues.

It localises to the peroxisome membrane. Involved in peroxisome biosynthesis and integrity. Assembles membrane vesicles before the matrix proteins are translocated. As a docking factor for PEX19, is necessary for the import of peroxisomal membrane proteins in the peroxisomes. This Homo sapiens (Human) protein is Peroxisomal biogenesis factor 3 (PEX3).